The chain runs to 227 residues: Small ribosomal subunit protein uS3m (227 aa).

This sequence belongs to the universal ribosomal protein uS3 family. As to quaternary structure, component of the mitochondrial small ribosomal subunit (mt-SSU). Mature yeast 74S mitochondrial ribosomes consist of a small (37S) and a large (54S) subunit. The 37S small subunit contains a 15S ribosomal RNA (15S mt-rRNA) and at least 32 different proteins. The 54S large subunit contains a 21S rRNA (21S mt-rRNA) and at least 45 different proteins. uS3m, uS4m and uS5m form the narrow entry site of the mRNA channel.

The protein resides in the mitochondrion. Essential for mitochondrial protein synthesis and required for the maturation of small ribosomal subunits. In terms of biological role, component of the mitochondrial ribosome (mitoribosome), a dedicated translation machinery responsible for the synthesis of mitochondrial genome-encoded proteins, including at least some of the essential transmembrane subunits of the mitochondrial respiratory chain. The mitoribosomes are attached to the mitochondrial inner membrane and translation products are cotranslationally integrated into the membrane. uS3m is essential for mitochondrial protein synthesis and required for the maturation of small ribosomal subunits. The sequence is that of Small ribosomal subunit protein uS3m (var1) from Schizosaccharomyces pombe (strain 972 / ATCC 24843) (Fission yeast).